Reading from the N-terminus, the 218-residue chain is N-(5'-phosphoribosyl)anthranilate isomerase (218 aa).

It belongs to the TrpF family.

The enzyme catalyses N-(5-phospho-beta-D-ribosyl)anthranilate = 1-(2-carboxyphenylamino)-1-deoxy-D-ribulose 5-phosphate. It functions in the pathway amino-acid biosynthesis; L-tryptophan biosynthesis; L-tryptophan from chorismate: step 3/5. The polypeptide is N-(5'-phosphoribosyl)anthranilate isomerase (Rhodopseudomonas palustris (strain BisB18)).